A 460-amino-acid polypeptide reads, in one-letter code: Ribosomal protein uS12 methylthiotransferase RimO (460 aa).

The MTTase N-terminal domain occupies 16-130 (NKIHFISLGC…ILSAIESKES (115 aa)). The [4Fe-4S] cluster site is built by C25, C61, C93, C164, C168, and C171. In terms of domain architecture, Radical SAM core spans 150 to 382 (STPKHYAYLK…SQTQKKNVEK (233 aa)). One can recognise a TRAM domain in the interval 385–455 (KQFVGKIVEA…GYDLVGRVVN (71 aa)).

It belongs to the methylthiotransferase family. RimO subfamily. [4Fe-4S] cluster serves as cofactor.

Its subcellular location is the cytoplasm. The catalysed reaction is L-aspartate(89)-[ribosomal protein uS12]-hydrogen + (sulfur carrier)-SH + AH2 + 2 S-adenosyl-L-methionine = 3-methylsulfanyl-L-aspartate(89)-[ribosomal protein uS12]-hydrogen + (sulfur carrier)-H + 5'-deoxyadenosine + L-methionine + A + S-adenosyl-L-homocysteine + 2 H(+). Catalyzes the methylthiolation of an aspartic acid residue of ribosomal protein uS12. This is Ribosomal protein uS12 methylthiotransferase RimO from Chlamydia abortus (strain DSM 27085 / S26/3) (Chlamydophila abortus).